Here is a 453-residue protein sequence, read N- to C-terminus: Probable L-galactonate transporter (453 aa).

The segment at 1-23 (MEKENITIDPRSSFTPSSSADIP) is disordered. At 1 to 42 (MEKENITIDPRSSFTPSSSADIPVPPDGLVQRSTRIKRIQTT) the chain is on the periplasmic side. Residues 10 to 20 (PRSSFTPSSSA) show a composition bias toward polar residues. The helical transmembrane segment at 43–63 (AMLLLFFAAVINYLDRSSLSV) threads the bilayer. The Cytoplasmic segment spans residues 64–71 (ANLTIREE). A helical membrane pass occupies residues 72 to 92 (LGLSATEIGALLSVFSLAYGI). Over 93 to 107 (AQLPCGPLLDRKGPR) the chain is Periplasmic. Residues 108 to 128 (LMLGLGMFFWSLFQAMSGMVH) traverse the membrane as a helical segment. The Cytoplasmic segment spans residues 129-174 (NFTQFVLVRIGMGIGEAPMNPCGVKVINDWFNIKERGRPMGFFNAA). A helical membrane pass occupies residues 175–195 (STIGVAVSPPILAAMMLVMGW). A topological domain (periplasmic) is located at residue R196. The helical transmembrane segment at 197–217 (GMFITIGVLGIFLAIGWYMLY) threads the bilayer. Residues 218–259 (RNREHVELTAVEQAYLNAGSVNARRDPLSFAEWRSLFRNRTM) are Cytoplasmic-facing. The chain crosses the membrane as a helical span at residues 260-280 (WGMMLGFSGINYTAWLYLAWL). Topologically, residues 281-295 (PGYLQTAYNLDLKST) are periplasmic. A helical transmembrane segment spans residues 296-316 (GLMAAIPFLFGAAGMLVNGYV). The Cytoplasmic portion of the chain corresponds to 317–332 (TDWLVKGGMAPIKSRK). A helical transmembrane segment spans residues 333 to 353 (ICIIAGMFCSAAFTLIVPQAT). Residues 354-359 (TSMTAV) are Periplasmic-facing. A helical transmembrane segment spans residues 360-380 (LLIGMALFCIHFAGTSCWGLI). Over 381 to 394 (HVAVASRMTASVGS) the chain is Cytoplasmic. The chain crosses the membrane as a helical span at residues 395–415 (IQNFASFICASFAPIITGFIV). Over 416 to 422 (DTTHSFR) the chain is Periplasmic. Residues 423 to 443 (LALIICGCVTAAGALAYIFLV) form a helical membrane-spanning segment. The Cytoplasmic portion of the chain corresponds to 444 to 453 (RQPINDPRKD).

It belongs to the major facilitator superfamily. Phthalate permease family.

Its subcellular location is the cell inner membrane. The enzyme catalyses L-galactonate(in) + H(+)(in) = L-galactonate(out) + H(+)(out). Functionally, probably responsible for the transport of L-galactonate from the periplasm across the inner membrane. Is essential for growth on L-galactonate as the sole carbon source. The chain is Probable L-galactonate transporter (lgoT) from Escherichia coli (strain K12).